A 1395-amino-acid chain; its full sequence is G-protein coupled receptor-associated sorting protein 1 (1395 aa).

Disordered stretches follow at residues 1-25 (MTGA…VVGG), 45-83 (QIMP…AKAI), and 269-288 (TNTW…FRSK). The span at 269 to 281 (TNTWSGPREDPNS) shows a compositional bias: basic and acidic residues. Ser-297 bears the Phosphoserine mark. Positions 446 to 469 (SMGTGASSKSRPRTDGERIGDSLF) are disordered. The span at 457-469 (PRTDGERIGDSLF) shows a compositional bias: basic and acidic residues. Phosphoserine occurs at positions 631 and 899. The interval 899-1395 (SETEEETIFG…QNDPEGDQEN (497 aa)) is OPRD1-binding.

The protein belongs to the GPRASP family. As to quaternary structure, interacts with cytoplasmic tails of a variety of G-protein coupled receptors such as D2 dopamine receptor/DRD2, delta opioid receptor/OPRD1, beta-2 adrenergic receptor/ADRB2 and D4 dopamine receptor/DRD4. Interacts with PER1. Interacts with BECN2; the interaction is direct. Expressed in the brain, with lower expression in medulla, spinal cord and substantia nigra.

It is found in the cytoplasm. In terms of biological role, modulates lysosomal sorting and functional down-regulation of a variety of G-protein coupled receptors. Targets receptors for degradation in lysosomes via its interaction with BECN2. The chain is G-protein coupled receptor-associated sorting protein 1 (GPRASP1) from Homo sapiens (Human).